Reading from the N-terminus, the 1680-residue chain is MVVREAMIVPQTVQGGGKGVNGCSLVSNYQNSRDLCLQSAAMEQKSKGVIENCNLGPHDVGVGWKRNSSEGSISSMDSLPCGETVFSPSDPHNSVFRKPRRLGVSESDDESVIDQSQEESLLRKSKRSVMGGTVQPHSAMAQSVDEAAPDHSSTPSDDGKDFPSSRVKFMCSFGGKILPRPSDQQLRYVGGQTRIIGINRDVNFSELRNKMRESFGQCYTFKYQLPDEDLDALVTVSSDEDLENMMEEYDKLEADGSSRLRVFLFPADQDATSFDIDSTGDLRNSEQRYVDAVNGIAESSTRRISDGVLGASPVSSDLLGLELSEPSWGLARGPDAVPMAMLATHHDPNLIHQVPVAHPVSALTGNLSNRSNAPSAPSSAPSSPPLLARNLHGKLPLVGELHQFQYLQDSQFKGVGPQYTGMPSEVAHQDSESYGGSGGSSAASQHEMHYRSTDSRRGPESPPKKFHDALHQDHPITVEQRRLSGTKMPRIGSHGKLTRLSEHSELAPSSRVDSQQMPDIHMAPGELQRLFPQQVPLQQTLWPHAMDTQQDSYRRPDMLQSSGAQPAVSGQQQQGYQPQQQLQHLFRSGLSQTGANHEGAYRQGDQQQQSQQFQEDLHVNPNYIPRSVSSHAIAAGIAAGQSTSYHGSAPSSPRPGFRELPSRHLPGGPQLQHQWTFNGAGYVDQGFGRRVMNYPDQATRSFRLSSSPPRYRDHHPHSEERLHRQAQQVSEPLHHEQVPVSGQLKFETNSVSQAQYDLVPRPQVPQYKGHNPFQEKITSFQDHQEVGDIRRHVLQQGKDNQLLAGQQHLHSILQPQRIDYQESLKQQGDQSIPIHPRFQDGQEKVAEWMVQERALEEEEARKRVLGRIRQAELEEEAAAEAVVSQHKDTHQGVYAGLHLPNDEDLLTSSLGDYPSGNRRNERLESSISNAFPFRHLPPSVLGGYTAPKSRVNPTETSHVAQYVSRPVDTDYLAVAGLRGGGNGQDMRSAALFEVNGLQQTSGYQMPSGPHRLMEERLMPSAFNPITQLQKLRINDNLALNNDMRWSGSEDVRNEPSIPARDRMGGIYEDHHQGLPGLTLGRSAGKLSRPSSNTSIPNLLDETIGEGSLLPSGPSYGTQAQGTNLIDITQSISAIDNPLYSTSYASRLSNTSLGLDSPLVTSGGMLNSSLEGTSFSDYYKIKMGDDLPNAKMPSSKIPSAEDNLSRSSSSSLSELSKSGSEDGLGGQLTMDQRTVDMVVAALDLDRSGSVVQSVLESSDAKEASLSESVHDHSLGKLGSVVGSVGTQSVWPLDSAPTLAAGLWEKKLDEAGMTEETFERHITSDGTTFEELTADDHEVLASTVDKENQEEVRTGLDEPADEDKANSTGLGSDPAAKAIARGLQTIKNADLEELRELGSGTFGTVYHGKWRGTDVAIKRIKASCFAGRPSEQERLIEDFWREACNLGHLHHPNVVAFYGVVADGPGGTLATVTEYMVNGSLKQVLQKKDRTIDRRKRLLIAMDAAFGMEYLHGKNIVHFDLKCENLLVNMRDPHRPICKVGDLGLSKVKHQTMVSGGVRGTLPWMAPELLNGNSSLVTEKVDVFSFGIVMWELLTGEEPYDKMHYGAIIGGIVNNTLRPLIPSWCDPAWRSLMERCWANEPAVRPSFSDIAKELRTMAAALQPKTQAQTQGQSHPHPQMQIV.

Residues 86–163 are disordered; sequence FSPSDPHNSV…TPSDDGKDFP (78 aa). The PB1 domain maps to 166–267; the sequence is RVKFMCSFGG…SRLRVFLFPA (102 aa). Disordered regions lie at residues 363–388, 417–516, 556–580, 594–613, 641–672, 700–725, and 1186–1226; these read LTGN…PLLA, PQYT…DSQQ, PDML…QPQQ, GANH…SQQF, QSTS…PQLQ, RSFR…LHRQ, and LPNA…LGGQ. The span at 366–388 shows a compositional bias: low complexity; it reads NLSNRSNAPSAPSSAPSSPPLLA. Over residues 446-482 the composition is skewed to basic and acidic residues; sequence HEMHYRSTDSRRGPESPPKKFHDALHQDHPITVEQRR. 2 stretches are compositionally biased toward low complexity: residues 560–580 and 603–613; these read QSSG…QPQQ and QGDQQQQSQQF. Polar residues predominate over residues 641–651; the sequence is QSTSYHGSAPS. Over residues 1204-1217 the composition is skewed to low complexity; the sequence is SRSSSSSLSELSKS. Serine 1248 carries the post-translational modification Phosphoserine. The span at 1339 to 1354 shows a compositional bias: basic and acidic residues; that stretch reads ASTVDKENQEEVRTGL. Positions 1339–1372 are disordered; that stretch reads ASTVDKENQEEVRTGLDEPADEDKANSTGLGSDP. Serine 1365 carries the phosphoserine modification. Residues 1389 to 1655 enclose the Protein kinase domain; it reads LEELRELGSG…SDIAKELRTM (267 aa). Residues 1395-1403 and lysine 1416 each bind ATP; that span reads LGSGTFGTV. Aspartate 1518 serves as the catalytic Proton acceptor. The tract at residues 1661–1680 is disordered; that stretch reads PKTQAQTQGQSHPHPQMQIV.

The protein belongs to the protein kinase superfamily. Ser/Thr protein kinase family. In terms of processing, hyperphosphorylated in response to auxin. Its phosphorylation state is also rapidly stimulated by photosynthetic activity (e.g. in response to blue light and red light irradiation); dephosphorylated in the darkness.

It localises to the cytoplasm. The catalysed reaction is L-seryl-[protein] + ATP = O-phospho-L-seryl-[protein] + ADP + H(+). It catalyses the reaction L-threonyl-[protein] + ATP = O-phospho-L-threonyl-[protein] + ADP + H(+). Its activity is regulated as follows. Activated by auxin via rapid phosphorylation. Regulated by photosynthesis-activity-dependent changes in its phosphorylation status. In terms of biological role, RAF-like protein kinase acting as a central mediator of a fast response pathway to auxin involving proteins phosphorylation, and leading to rapid cellular responses including membrane depolarization and cytoplasmic streaming. Required for general growth and developmental process. Photosynthesis signaling kinase involved in the regulation of the sucrose metabolism involving PGM1. Necessary for optimal chloroplast electron transport rate (ETR). The polypeptide is RAF-like serine/threonine-protein kinase PRAF (Marchantia polymorpha (Common liverwort)).